The sequence spans 1704 residues: Villidin (1704 aa).

WD repeat units follow at residues Gly-82–Asp-122, Lys-133–Ser-173, Gly-180–Gln-221, and Thr-225–Pro-271. 2 disordered regions span residues Ile-439–Phe-460 and Ser-606–Thr-721. Residues Ser-442–Gly-456 show a composition bias toward gly residues. Residues Pro-459–Glu-563 form the PH 1 domain. Composition is skewed to low complexity over residues Gln-613–Gln-636, Ser-651–Ser-701, and Asn-709–Thr-721. PH domains are found at residues Asp-727–Lys-828 and Glu-871–Lys-969. The interval Leu-848–Gln-877 is disordered. The segment covering Ser-854–Pro-873 has biased composition (acidic residues). Gelsolin-like repeat units lie at residues Lys-1025–Asn-1119, Ile-1138–Tyr-1241, Gly-1293–Lys-1390, Lys-1404–Thr-1494, and Arg-1520–Trp-1615. The HP domain occupies Asp-1641 to Phe-1704.

It is found in the membrane. The protein localises to the cytoplasm. It localises to the cytoskeleton. May function as a linker between membranes and the actin cytoskeleton. This is Villidin (vilA) from Dictyostelium discoideum (Social amoeba).